The sequence spans 514 residues: MKILIAVVFGCLLIILSFSKYFNDQLLDATTKDIKESERPVDKLIGGLLTADFDEGSCLSRYHKYFLYRKPSPYMPSEYLVSELRSYEMLHKRCGPDTKAYKEATEKLSRDEYYASESNGECRYIVWLARDGLGNRLITLASVFLYAILTERIILVDNRKDVSDLLCEPFPGTSWLLPLDFPMLNYTYAYGYNKEYPRCYGTMLENHAINSTSIPPHLYLHNIHDSRDSDKLFFCQKDQSFIDKVPWLIIQTNAYFVPSLWLNPTFQTKLVKLFPQKETVFHHLARYLFHPTNEVWDMVTKYYDAHLSNADERLGIQIRVFGKPSGYFKHVMDQVVACTQREKLLPEFEEESKVNISKPPKLKVVLVASLYPEYSVNLTNMFLARPSSTGEIIEVYQPSAERVQQTDKKSHDQKALAEMYLLSLTDNIVTSGWSTFGYVSYSLGGLKPWLLYQPVNFTTPNPPCVRSKSMEPCYHTPPSHGCEADWGTNSGKILPFVRHCEDMMYGGLKLYDDF.

Residues Asn-185, Asn-210, Asn-355, Asn-377, and Asn-456 are each glycosylated (N-linked (GlcNAc...) asparagine).

It belongs to the glycosyltransferase 37 family. Expressed in root, leaves, stems and seedlings.

Its subcellular location is the golgi apparatus. Its pathway is protein modification; protein glycosylation. May be involved in cell wall biosynthesis. May act as a fucosyltransferase. This Arabidopsis thaliana (Mouse-ear cress) protein is Putative fucosyltransferase 10 (FUT10).